Here is a 376-residue protein sequence, read N- to C-terminus: Small ribosomal subunit protein uS11m (376 aa).

It belongs to the universal ribosomal protein uS11 family. Component of the mitochondrial small ribosomal subunit (mt-SSU). Mature N.crassa 74S mitochondrial ribosomes consist of a small (37S) and a large (54S) subunit. The 37S small subunit contains a 16S ribosomal RNA (16S mt-rRNA) and 32 different proteins. The 54S large subunit contains a 23S rRNA (23S mt-rRNA) and 42 different proteins.

The protein localises to the mitochondrion. Component of the mitochondrial ribosome (mitoribosome), a dedicated translation machinery responsible for the synthesis of mitochondrial genome-encoded proteins, including at least some of the essential transmembrane subunits of the mitochondrial respiratory chain. The mitoribosomes are attached to the mitochondrial inner membrane and translation products are cotranslationally integrated into the membrane. This Neurospora crassa (strain ATCC 24698 / 74-OR23-1A / CBS 708.71 / DSM 1257 / FGSC 987) protein is Small ribosomal subunit protein uS11m (mrps18).